A 524-amino-acid chain; its full sequence is MLGMSLREAAAALRLGQIKPTELCQKCLSFIKETSFLNAYITVTEDFALKQAAEADERFIQGKPLGDLDGIPIAIKDNFSTAGIETTCASRMLKGYIAPYNATVVQKLFDQGAVFMGKTNLDEFAMGSGSTDSIFGPVKNPWSYSRSYIDKTSLSHHAAKDDSDWVITGGSSGGSACAVSAGTCYLAIGSDTGGSTRNPASHCGVVGLKPTYGLVSRHGLIPLVNSMDVPGIVTRCVDDAATVLGVLAGHDPYDSTTIQDPFQPFSLPEKVDVRNVCIGIPKEYHAPGLSAEILSLWSETADLLENAGAKVVEVSLPHTPYSIVCYHVLCTAEVASNMARFDGLEYGHRSDIDDSTEALYAATRREGFNEVVRGRILSGNYFLLKRNYEKYFVKAQKVRRLIADDFVKVFNSGVHVLLTPTTLGDAAPYLEFIQEDNRTRSAQEDVFTQCANMAGLPAVTVPAALSSRGLPLGLQFIGRAFCEQQLLTIAKWFEKQIDFSPLQFNRDSENGNIVQQYSKSASSV.

Catalysis depends on charge relay system residues Lys76 and Ser171. Residue Ser195 is the Acyl-ester intermediate of the active site.

It belongs to the amidase family. GatA subfamily. In terms of assembly, subunit of the heterotrimeric GatCAB amidotransferase (AdT) complex, composed of A (qrsl1), B (gatb) and C (gatc) subunits.

The protein localises to the mitochondrion. The enzyme catalyses L-glutamyl-tRNA(Gln) + L-glutamine + ATP + H2O = L-glutaminyl-tRNA(Gln) + L-glutamate + ADP + phosphate + H(+). In terms of biological role, allows the formation of correctly charged Gln-tRNA(Gln) through the transamidation of misacylated Glu-tRNA(Gln) in the mitochondria. The reaction takes place in the presence of glutamine and ATP through an activated gamma-phospho-Glu-tRNA(Gln). The chain is Glutamyl-tRNA(Gln) amidotransferase subunit A, mitochondrial (qrsl1) from Xenopus tropicalis (Western clawed frog).